Here is a 55-residue protein sequence, read N- to C-terminus: MVYRRRRRSSTGTTYGSTRRRRSSGYRRRPGRPRTYRRSRSRSSTGRRSYRTRYY.

The tract at residues 1–55 is disordered; sequence MVYRRRRRSSTGTTYGSTRRRRSSGYRRRPGRPRTYRRSRSRSSTGRRSYRTRYY. 2 repeat units span residues 5 to 10 and 19 to 24. Residues 5–24 form a 2 X 6 AA repeats of R-R-R-R-S-S region; sequence RRRRSSTGTTYGSTRRRRSS. Over residues 18–41 the composition is skewed to basic residues; sequence TRRRRSSGYRRRPGRPRTYRRSRS.

Interacts with protein AC132. Phosphorylated.

The protein localises to the virion. It localises to the host cytoplasm. In terms of biological role, plays a role in viral DNA packaging and nucleocapsid assembly. Promotes viral gene transcription during the late stage of infection while it is non-essential for the basal level of viral gene transcription. The protein is DNA-binding protein (P6.9) of Lepidoptera (butterflies and moths).